The chain runs to 253 residues: MAACWVHYLLLLLLGVSHQTLAQSLQCAVSKVLRLEDDPSRTFNWTSKPDKVETCNPGELCQETVLLIKAEGTKTAVVASKGCASREIEAVTFIQYTPPPGVIAISYSNYCNSSLCNNSKNVSLFWKPPDTTATSKILGALSCPTCVALGSCSSAPSMPCANSTTQCYQGKIELSGGGMDSVLHIKGCTTAIGCRLMAAITSVGPMTVKETCSYHSLLQPRKAEESRASGRSTSLWVLELLLPAVLVALTHFP.

The signal sequence occupies residues 1–24; the sequence is MAACWVHYLLLLLLGVSHQTLAQS. Residues Asn44, Asn112, Asn117, Asn121, and Asn162 are each glycosylated (N-linked (GlcNAc...) asparagine). Positions 53–117 constitute a UPAR/Ly6 1 domain; it reads ETCNPGELCQ…SNYCNSSLCN (65 aa). The UPAR/Ly6 2 domain maps to 143-218; that stretch reads CPTCVALGSC…KETCSYHSLL (76 aa). Ser226 carries GPI-anchor amidated serine lipidation. A propeptide spans 227–253 (removed in mature form); sequence RASGRSTSLWVLELLLPAVLVALTHFP.

Interacts with VAMP3. Interacts with LY6K. Interacts with DPEP3; co-localized on the cell surface of spermatocytes, spermatids, and testicular spermatozoa, co-localized only in cytoplasmic droplets of caput and corpus epididymal sperm. Interacts with ADAM5. In terms of processing, N-glycosylated; by high mannose and/or biantennary complex and/or certain types of hybrid oligosaccharides; possesses different oligosaccharides chains according to its subcellular localization in the testis. Post-translationally, sheds from membrane raft by ACE and released from the cell surface of epididymal sperm while it passes through the caput epididymis leading to disappearance of TEX101 on spermatozoa; is essential to produce fertile spermatozoa.

The protein resides in the cell membrane. It localises to the membrane raft. Its subcellular location is the cytoplasmic vesicle. It is found in the secretory vesicle. The protein localises to the acrosome. The protein resides in the secreted. Plays a role in fertilization by controlling binding of sperm to zona pellucida and migration of spermatozoa into the oviduct. May play a role in signal transduction and promote protein tyrosine phosphorylation. The chain is Testis-expressed protein 101 from Cricetulus griseus (Chinese hamster).